A 127-amino-acid chain; its full sequence is UPF0738 protein Bsph_1225 (127 aa).

Belongs to the UPF0738 family.

The sequence is that of UPF0738 protein Bsph_1225 from Lysinibacillus sphaericus (strain C3-41).